The chain runs to 503 residues: Diels-Alderase cghA (503 aa).

Belongs to the Diels-Alderase family.

It carries out the reaction (2S)-3-[(2S)-3,5-dioxo-4-[(2E,4R,6R,8E,10E,12E)-4,6,12-trimethyltetradeca-2,8,10,12-tetraenoyl]pyrrolidin-2-yl]-2-hydroxy-2-methylpropanoate = sch 210972. Its pathway is secondary metabolite biosynthesis. Diels-Alderase; part of the gene cluster that mediates the biosynthesis of the tetramic acid Sch210972, a potential anti-HIV fungal natural product that contains a decalin core. The PKS module of cghG together with the enoylreductase cghC catalyze the formation of the polyketide unit which is then conjugated to 4-hydroxyl-4-methyl glutamate (HMG) by the condensation domain of the cghG NRPS module. One unique structural feature of Sch210972 is the tetramic acid motif proposed to be derived from the non-proteinogenic amino acid HMG, by a Dieckmann-type condensation catalyzed by the reductase domain of cghG. The aldolase cghB catalyzes the aldol condensation of 2 molecules of pyruvic acid to yield the intermediate 4-hydroxyl-4-methyl-2-oxoglutarate (HMOG), which can then be stereoselectively transaminated by an unidentified enzyme to form HMG. The Diels-Alderase cghA then uses the Dieckmann product released by cghG as substrate and catalyzes the Diels-Alder cycloaddition to form the decalin ring of Sch210972. CghA also suppresses the nonenzymatic formation of the alternative stereoisomer. In Chaetomium globosum (strain ATCC 6205 / CBS 148.51 / DSM 1962 / NBRC 6347 / NRRL 1970) (Soil fungus), this protein is Diels-Alderase cghA.